The primary structure comprises 416 residues: S-adenosylmethionine synthase (416 aa).

ATP is bound at residue His-16. Asp-18 provides a ligand contact to Mg(2+). A K(+)-binding site is contributed by Glu-44. Residues Glu-57 and Gln-100 each coordinate L-methionine. The interval 100-110 (QSPDIAQGVTQ) is flexible loop. Residues 175–177 (DGK), 251–252 (KF), Asp-260, 266–267 (RK), Ala-283, and Lys-287 each bind ATP. Residue Asp-260 participates in L-methionine binding. Lys-291 contacts L-methionine.

The protein belongs to the AdoMet synthase family. Homotetramer; dimer of dimers. The cofactor is Mg(2+). Requires K(+) as cofactor.

The protein localises to the cytoplasm. It carries out the reaction L-methionine + ATP + H2O = S-adenosyl-L-methionine + phosphate + diphosphate. It functions in the pathway amino-acid biosynthesis; S-adenosyl-L-methionine biosynthesis; S-adenosyl-L-methionine from L-methionine: step 1/1. Functionally, catalyzes the formation of S-adenosylmethionine (AdoMet) from methionine and ATP. The overall synthetic reaction is composed of two sequential steps, AdoMet formation and the subsequent tripolyphosphate hydrolysis which occurs prior to release of AdoMet from the enzyme. The chain is S-adenosylmethionine synthase from Crocosphaera subtropica (strain ATCC 51142 / BH68) (Cyanothece sp. (strain ATCC 51142)).